We begin with the raw amino-acid sequence, 583 residues long: CTP synthase (583 aa).

The amidoligase domain stretch occupies residues 1–278 (MRKHPQTATK…DAYVVRRLNL (278 aa)). Serine 20 serves as a coordination point for CTP. Serine 20 serves as a coordination point for UTP. Residues 21–26 (SLGKGL) and aspartate 78 contribute to the ATP site. Aspartate 78 and glutamate 152 together coordinate Mg(2+). CTP is bound by residues 159 to 161 (DIE), 199 to 204 (KTKPTQ), and lysine 235. UTP is bound by residues 199-204 (KTKPTQ) and lysine 235. A Glutamine amidotransferase type-1 domain is found at 303–551 (RIALVGKYVE…VGAAMDYKAG (249 aa)). Glycine 366 provides a ligand contact to L-glutamine. The active-site Nucleophile; for glutamine hydrolysis is the cysteine 393. Residues 394–397 (LGLQ), glutamate 416, and arginine 477 each bind L-glutamine. Active-site residues include histidine 524 and glutamate 526. Positions 560–583 (EQSSNGIQHRDSAARPIPEPAARG) are disordered.

Belongs to the CTP synthase family. In terms of assembly, homotetramer.

The enzyme catalyses UTP + L-glutamine + ATP + H2O = CTP + L-glutamate + ADP + phosphate + 2 H(+). The catalysed reaction is L-glutamine + H2O = L-glutamate + NH4(+). It carries out the reaction UTP + NH4(+) + ATP = CTP + ADP + phosphate + 2 H(+). It functions in the pathway pyrimidine metabolism; CTP biosynthesis via de novo pathway; CTP from UDP: step 2/2. With respect to regulation, allosterically activated by GTP, when glutamine is the substrate; GTP has no effect on the reaction when ammonia is the substrate. The allosteric effector GTP functions by stabilizing the protein conformation that binds the tetrahedral intermediate(s) formed during glutamine hydrolysis. Inhibited by the product CTP, via allosteric rather than competitive inhibition. Catalyzes the ATP-dependent amination of UTP to CTP with either L-glutamine or ammonia as the source of nitrogen. Regulates intracellular CTP levels through interactions with the four ribonucleotide triphosphates. The protein is CTP synthase of Mycolicibacterium paratuberculosis (strain ATCC BAA-968 / K-10) (Mycobacterium paratuberculosis).